The following is a 297-amino-acid chain: Superoxide dismutase 1 copper chaperone (297 aa).

Cysteine 11 is a binding site for Cu cation. The tract at residues 222–263 is disordered; sequence GSSCCSKKDSSPSEKPSCCSQEKKSCCSSKKPSCCSQEKKGC. Positions 234-257 are enriched in low complexity; that stretch reads SEKPSCCSQEKKSCCSSKKPSCCS.

It belongs to the CCS1 family.

The protein resides in the cytoplasm. In terms of biological role, copper chaperone for superoxide dismutase 1 (sod1). Binds copper ions and delivers them specifically to sod1. Also has a role in cell protection against copper ion toxicity during conditions of copper excess. The C-terminal region is thought to act specifically in this sequestration role. The chain is Superoxide dismutase 1 copper chaperone (ccs1) from Schizosaccharomyces pombe (strain 972 / ATCC 24843) (Fission yeast).